Consider the following 198-residue polypeptide: uncharacterized protein (198 aa).

The C4-type zinc finger occupies 9–43 (CPVCGGKGTFVITSHQIDIPYFGPVLETTMICEKC).

This sequence belongs to the ZPR1 family.

This is an uncharacterized protein from Methanocaldococcus jannaschii (strain ATCC 43067 / DSM 2661 / JAL-1 / JCM 10045 / NBRC 100440) (Methanococcus jannaschii).